Here is a 66-residue protein sequence, read N- to C-terminus: Large ribosomal subunit protein eL29 (66 aa).

Residues 1–14 are compositionally biased toward polar residues; sequence MAKSKNSTNKNQIS. Positions 1-66 are disordered; it reads MAKSKNSTNK…KNLEKKVNKE (66 aa). A compositionally biased stretch (basic residues) spans 15 to 31; sequence KSHRNGIKKPKDHRHIS. The segment covering 47 to 66 has biased composition (basic and acidic residues); sequence IKNDPSIKKSKNLEKKVNKE.

Belongs to the eukaryotic ribosomal protein eL29 family.

The protein resides in the cytoplasm. This Tetrahymena thermophila protein is Large ribosomal subunit protein eL29 (RPL29).